The following is a 312-amino-acid chain: Putative pyridoxal kinase BUD16 (312 aa).

Substrate is bound by residues S9, T44, and Y122. ATP contacts are provided by residues 183–184 (TS) and 211–223 (RVPFIDSYFTGVG). D224 serves as a coordination point for substrate.

It belongs to the pyridoxine kinase family. A divalent metal cation serves as cofactor.

The protein localises to the cytoplasm. It localises to the nucleus. It catalyses the reaction pyridoxal + ATP = pyridoxal 5'-phosphate + ADP + H(+). Required for synthesis of pyridoxal-5-phosphate from vitamin B6. Important for bud site selection. The sequence is that of Putative pyridoxal kinase BUD16 (BUD16) from Saccharomyces cerevisiae (strain ATCC 204508 / S288c) (Baker's yeast).